A 547-amino-acid chain; its full sequence is Sodium-coupled neutral amino acid transporter 4 (547 aa).

Residues M1 to I30 form a disordered region. Over M1–G104 the chain is Extracellular. S49 carries the phosphoserine modification. The helical transmembrane segment at I105 to L125 threads the bilayer. Over L126–K151 the chain is Cytoplasmic. Residues I152–I172 form a helical membrane-spanning segment. At I173 to Y195 the chain is on the extracellular side. A helical transmembrane segment spans residues L196 to L216. Topologically, residues K217 to G220 are cytoplasmic. A helical transmembrane segment spans residues Y221–I241. Over Y242–T332 the chain is Extracellular. C249 and C321 are oxidised to a cystine. Residues N260, N264, and N276 are each glycosylated (N-linked (GlcNAc...) asparagine). Residues A333–Y353 traverse the membrane as a helical segment. Residues S354–N369 are Cytoplasmic-facing. A helical membrane pass occupies residues I370–F390. At Y391–P411 the chain is on the extracellular side. The chain crosses the membrane as a helical span at residues L412–F432. The Cytoplasmic portion of the chain corresponds to P433–H453. The helical transmembrane segment at F454 to I474 threads the bilayer. Residues K475–Y476 lie on the Extracellular side of the membrane. The helical transmembrane segment at I477 to F497 threads the bilayer. The Cytoplasmic segment spans residues Y498 to G514. A helical transmembrane segment spans residues A515–I535. The Extracellular portion of the chain corresponds to D536 to H547.

It belongs to the amino acid/polyamine transporter 2 family. In terms of processing, the disulfide bond plays an important role in substrate transport, but has no effect on trafficking to the cell surface. As to expression, expressed almost exclusively in embryonic and adult liver, and at lower levels in the kidney. Expressed at lower levels in adult muscle and pancreas. Detected in fetal blood vessels. Expressed in syncytiotrophoblas of placenta during first trimester and at term. Highly expressed in first trimester placenta compared to term placenta.

The protein localises to the cell membrane. The protein resides in the cell projection. It is found in the microvillus membrane. It catalyses the reaction L-methionine(in) + Na(+)(in) = L-methionine(out) + Na(+)(out). The enzyme catalyses L-asparagine(in) + Na(+)(in) = L-asparagine(out) + Na(+)(out). The catalysed reaction is L-threonine(in) + Na(+)(in) = L-threonine(out) + Na(+)(out). It carries out the reaction L-serine(in) + Na(+)(in) = L-serine(out) + Na(+)(out). It catalyses the reaction glycine(in) + Na(+)(in) = glycine(out) + Na(+)(out). The enzyme catalyses L-alanine(in) + Na(+)(in) = L-alanine(out) + Na(+)(out). The catalysed reaction is L-glutamine(in) + Na(+)(in) = L-glutamine(out) + Na(+)(out). It carries out the reaction L-histidine(in) + Na(+)(in) = L-histidine(out) + Na(+)(out). It catalyses the reaction L-cysteine(in) + Na(+)(in) = L-cysteine(out) + Na(+)(out). The enzyme catalyses L-proline(in) + Na(+)(in) = L-proline(out) + Na(+)(out). Functionally, symporter that cotransports neutral amino acids and sodium ions from the extraccellular to the intracellular side of the cell membrane. The transport is electrogenic, pH dependent and partially tolerates substitution of Na(+) by Li(+). Preferentially transports smaller amino acids, such as glycine, L-alanine, L-serine, L-asparagine and L-threonine, followed by L-cysteine, L-histidine, L-proline and L-glutamine and L-methionine. The sequence is that of Sodium-coupled neutral amino acid transporter 4 from Homo sapiens (Human).